Here is a 504-residue protein sequence, read N- to C-terminus: MEKFQGYLELDRSWKHDFLYPLIFQEYIYAFAHDHGLNRYILLENVSYDRKYSFLIVKRLITRMYQQNHLILSANDSNQNEFFGHKKNLYSQMISEGFAVIVEIPFSLRLISSLAGKEIVKFHNLRSIHSIFPFLEDKFSHLNYILDIRIPYPVHIEILVQTLRSWVKDAPSLHLLRLFLYEYHNWNSIITSNKSISIFSKGNQRLFLFLYNSHIWEYESLFVFFRNQSSHLRSTSSGALLGRSYFYGKLENLVKVFTKDLPVILRFCKDPFMHYVRYQEKSILASKGTFYLMNKWKYYLVNLWQCHFSVWSQPRRIYINQLSKNSLDFMGFLSNVRLNLSVVRSQMLENSFIMDKPIKKFDTIVPIITMIRSLTKAKFCTVLGHPISKPVWADLLDSDIIERFGRICRNLFHYYSGSSRKKSLYRIKYILRLSCVRTLARKHQSTVRAFLKKLGSDFLEEFFTEEEKVLSLILSRDFSISQKLYRGRVWYLDIICIHDLANHS.

Belongs to the intron maturase 2 family. MatK subfamily.

The protein localises to the plastid. It localises to the chloroplast. Its function is as follows. Usually encoded in the trnK tRNA gene intron. Probably assists in splicing its own and other chloroplast group II introns. In Simmondsia chinensis (Jojoba), this protein is Maturase K.